We begin with the raw amino-acid sequence, 292 residues long: Rhodanese-like domain-containing protein 11, chloroplastic (292 aa).

Residues M1–R56 constitute a chloroplast transit peptide. The Rhodanese domain maps to S101–G224. Catalysis depends on C184, which acts as the Cysteine persulfide intermediate.

Its subcellular location is the plastid. It is found in the chloroplast. The chain is Rhodanese-like domain-containing protein 11, chloroplastic (STR11) from Arabidopsis thaliana (Mouse-ear cress).